The primary structure comprises 151 residues: UPF0756 membrane protein Dred_1676 (151 aa).

A run of 4 helical transmembrane segments spans residues 9–29 (VILL…CASV), 47–67 (THGL…PIAT), 75–95 (LLYN…ILAT), and 111–131 (IIFG…GQPV).

This sequence belongs to the UPF0756 family.

It is found in the cell membrane. The chain is UPF0756 membrane protein Dred_1676 from Desulforamulus reducens (strain ATCC BAA-1160 / DSM 100696 / MI-1) (Desulfotomaculum reducens).